Reading from the N-terminus, the 577-residue chain is Lysine-specific demethylase 7B (577 aa).

The PHD-type zinc finger occupies 5-56; that stretch reads QLYCVCRQPYDVSRFMIECDICKDWFHGSCVEVEEHYAVDIDVYHCPNCDVH. The region spanning 198–354 is the JmjC domain; the sequence is FSDTKMAELV…MQLRCYEMER (157 aa). Threonine 247 is a substrate binding site. Residues histidine 250 and aspartate 252 each coordinate Fe cation. Residue lysine 267 coordinates substrate. Position 322 (histidine 322) interacts with Fe cation. Positions 460–513 are disordered; that stretch reads CPSTRSAHERGSHARKTARRLRGHHHHHHRHHHHHHHHHHHNHQHSDGPKAPSH. Residues 472 to 502 are compositionally biased toward basic residues; the sequence is HARKTARRLRGHHHHHHRHHHHHHHHHHHNH.

The protein belongs to the JHDM1 histone demethylase family. JHDM1D subfamily. Fe(2+) serves as cofactor. In terms of tissue distribution, predominantly expressed in brain.

The protein resides in the nucleus. Histone demethylase required for brain development. Specifically demethylates dimethylated 'Lys-9' and 'Lys-27' (H3K9me2 and H3K27me2, respectively) of histone H3 and monomethylated histone H4 'Lys-20' residue (H4K20Me1), thereby playing a central role in histone code. The chain is Lysine-specific demethylase 7B (jhdm1db) from Danio rerio (Zebrafish).